We begin with the raw amino-acid sequence, 231 residues long: Large ribosomal subunit protein uL1 (231 aa).

This sequence belongs to the universal ribosomal protein uL1 family. In terms of assembly, part of the 50S ribosomal subunit.

Functionally, binds directly to 23S rRNA. The L1 stalk is quite mobile in the ribosome, and is involved in E site tRNA release. In terms of biological role, protein L1 is also a translational repressor protein, it controls the translation of the L11 operon by binding to its mRNA. This is Large ribosomal subunit protein uL1 from Acetivibrio thermocellus (strain ATCC 27405 / DSM 1237 / JCM 9322 / NBRC 103400 / NCIMB 10682 / NRRL B-4536 / VPI 7372) (Clostridium thermocellum).